Consider the following 1261-residue polypeptide: AT-rich interactive domain-containing protein 4A (1261 aa).

The segment at 4-121 (ADEPAYLTVG…RHFAESETLD (118 aa)) is DNA-binding. Disordered stretches follow at residues 142–169 (RGRR…DKRR), 273–310 (ESSS…LDPE), and 435–470 (APEM…PRGR). Composition is skewed to acidic residues over residues 151 to 165 (TEDE…EEDE) and 276 to 289 (SSDD…EHEE). Residues 290–299 (EKEKEAKKEE) are compositionally biased toward basic and acidic residues. The segment covering 300–310 (EELPEEELDPE) has biased composition (acidic residues). An ARID domain is found at 309-401 (PEERDNFLQQ…YLYGFEEYCR (93 aa)). K481 participates in a covalent cross-link: Glycyl lysine isopeptide (Lys-Gly) (interchain with G-Cter in SUMO2). Disordered stretches follow at residues 498–582 (LENK…GTKV), 633–768 (WPLD…EAGD), and 842–953 (FSST…EDAM). Over residues 512–522 (PAAKREHELLF) the composition is skewed to basic and acidic residues. A compositionally biased stretch (basic residues) spans 526-536 (STPKNKEKKIK). Residues 541–551 (SERDSDEEEEK) are compositionally biased toward acidic residues. A compositionally biased stretch (basic and acidic residues) spans 552–564 (SQEREETESRCDS). Residues 565–574 (EGEDEEDDTE) show a composition bias toward acidic residues. The 53-residue stretch at 579 to 631 (GTKVKVKYGRGKTQKIYEASIKSTEMDDGEILYLVHYYGWNVRYDEWVKADRI) folds into the Tudor-knot domain. Residues 640-649 (PKKKQKKKVK) are compositionally biased toward basic residues. A compositionally biased stretch (basic and acidic residues) spans 650-665 (NKEDSEKDEKRDEERQ). Residues 676–689 (STFSPNMPYSLSKT) show a composition bias toward polar residues. S679 carries the post-translational modification Phosphoserine. Over residues 690-702 (SNSEGKSDSCSSD) the composition is skewed to low complexity. The span at 708-753 (QLEKSSGGEDLSPDVKEELEKNENAHDDKLDEENPKIVHISKENDR) shows a compositional bias: basic and acidic residues. S719 is subject to Phosphoserine. Residues K723 and K743 each participate in a glycyl lysine isopeptide (Lys-Gly) (interchain with G-Cter in SUMO2) cross-link. Residue S867 is modified to Phosphoserine. 2 stretches are compositionally biased toward basic and acidic residues: residues 899-909 (KGAHVEQHFET) and 929-947 (TSEK…TPLK). Residues 955–968 (LIGPETLVCHEVDL) form a retinoblastoma protein binding region. The span at 1067–1080 (HERESREKGQKRPS) shows a compositional bias: basic and acidic residues. Disordered regions lie at residues 1067–1173 (HERE…RTYK) and 1216–1261 (RRRK…VECR). A phosphoserine mark is found at S1113 and S1149. Positions 1230–1252 (HAGASMSSASSDTGMSPSSSSPP) are enriched in low complexity.

As to quaternary structure, identified in mSin3A corepressor complexes together with SIN3A, SIN3B, RBBP4, RBBP7, SAP30, BRMS1, HDAC1 and HDAC2. Interacts with BRMS1. Interacts with RB1. Interacts with ARID4B. Interacts with AR. In terms of tissue distribution, expressed in Sertoli cells of the testis.

Its subcellular location is the nucleus. Functionally, DNA-binding protein which modulates activity of several transcription factors including RB1 (retinoblastoma-associated protein) and AR (androgen receptor). May function as part of an mSin3A repressor complex. Has no intrinsic transcriptional activity. Plays a role in the regulation of epigenetic modifications at the PWS/AS imprinting center near the SNRPN promoter, where it might function as part of a complex with RB1 and ARID4B. Involved in spermatogenesis, together with ARID4B, where it acts as a transcriptional coactivator for AR and enhances expression of genes required for sperm maturation. Regulates expression of the tight junction protein CLDN3 in the testis, which is important for integrity of the blood-testis barrier. Plays a role in myeloid homeostasis where it regulates the histone methylation state of bone marrow cells and expression of various genes involved in hematopoiesis. May function as a leukemia suppressor. The sequence is that of AT-rich interactive domain-containing protein 4A from Mus musculus (Mouse).